The following is a 99-amino-acid chain: U1-theraphotoxin-Lsp1a (99 aa).

The signal sequence occupies residues 1–23; it reads MRSLTLAALLLCSLLLVFHTSAA. Positions 24–50 are excised as a propeptide; the sequence is AELEAQEGHLMIPGDTDTALETVDDER. 4 cysteine pairs are disulfide-bonded: Cys-54-Cys-67, Cys-58-Cys-91, Cys-72-Cys-74, and Cys-85-Cys-96.

It belongs to the neurotoxin 12 (Hwtx-2) family. 04 (lasiotoxin) subfamily. In terms of tissue distribution, expressed by the venom gland.

Its subcellular location is the secreted. Toxin that causes irreversible contractile paralysis into adult Aedes aegypti resulting in 100% mortality after 24 hours. In Lasiodora sp. (strain IBSP 8539) (Brazilian salmon pink birdeater), this protein is U1-theraphotoxin-Lsp1a.